The sequence spans 549 residues: Chaperonin GroEL (549 aa).

Residues 29–32 (TLGP), Lys50, 86–90 (DGTTT), Gly414, 478–480 (NAA), and Asp494 each bind ATP.

The protein belongs to the chaperonin (HSP60) family. Forms a cylinder of 14 subunits composed of two heptameric rings stacked back-to-back. Interacts with the co-chaperonin GroES.

Its subcellular location is the cytoplasm. The catalysed reaction is ATP + H2O + a folded polypeptide = ADP + phosphate + an unfolded polypeptide.. In terms of biological role, together with its co-chaperonin GroES, plays an essential role in assisting protein folding. The GroEL-GroES system forms a nano-cage that allows encapsulation of the non-native substrate proteins and provides a physical environment optimized to promote and accelerate protein folding. The polypeptide is Chaperonin GroEL (Psychrobacter cryohalolentis (strain ATCC BAA-1226 / DSM 17306 / VKM B-2378 / K5)).